The primary structure comprises 159 residues: Disease resistance response protein Pi176 (159 aa).

The protein belongs to the BetVI family.

The sequence is that of Disease resistance response protein Pi176 from Pisum sativum (Garden pea).